Reading from the N-terminus, the 139-residue chain is Small ribosomal subunit protein uS11 (139 aa).

The protein belongs to the universal ribosomal protein uS11 family. Part of the 30S ribosomal subunit.

Its function is as follows. Located on the platform of the 30S subunit. The protein is Small ribosomal subunit protein uS11 of Pyrobaculum islandicum (strain DSM 4184 / JCM 9189 / GEO3).